A 179-amino-acid chain; its full sequence is MPRRRVIGQRKILPDPKFGSELLAKFVNILMVDGKKSTAESIVYSALETLAQRSGKSELEAFEVALENVRPTVEVKSRRVGGSTYQVPVEVRPVRRNALAMRWIVEAARKRGDKSMALRLANELSDAAENKGTAVKKREDVHRMAEANKAFAHYRWLSLRSFSHQAGASSKQPALGYLN.

This sequence belongs to the universal ribosomal protein uS7 family. Part of the 30S ribosomal subunit. Contacts proteins S9 and S11. Cross-links to IF3 and the P and E site tRNAs.

Functionally, one of the primary rRNA binding proteins, it binds directly to 16S rRNA where it nucleates assembly of the head domain of the 30S subunit. Is located at the subunit interface close to the decoding center, where it has been shown to contact mRNA. Has been shown to contact tRNA in both the P and E sites; it probably blocks exit of the E site tRNA. Its function is as follows. Protein S7 is also a translational repressor protein; it regulates the expression of the str operon members to different degrees by binding to its mRNA. The chain is Small ribosomal subunit protein uS7 (rpsG) from Escherichia coli (strain K12).